The chain runs to 1699 residues: Cilia- and flagella-associated protein 61 (1699 aa).

Over residues 1–22 (MYSNNQLDNPNHSRSQYRNGDQ) the composition is skewed to polar residues. Disordered regions lie at residues 1–23 (MYSNNQLDNPNHSRSQYRNGDQS), 489–515 (QLKRPQKKVTKRPKRQKEEDKKEDEFK), and 1340–1365 (ERDANSENADKGFDDTQSRDGDEENQ). Over residues 489–503 (QLKRPQKKVTKRPKR) the composition is skewed to basic residues. Composition is skewed to basic and acidic residues over residues 504–515 (QKEEDKKEDEFK) and 1340–1359 (ERDANSENADKGFDDTQSRD).

It is found in the cell projection. The protein resides in the cilium. Its function is as follows. As component of a spoke-associated complex, regulates ciliary mobility by mediating a stable and functional assembly of the radial spoke 3 (RS3). The chain is Cilia- and flagella-associated protein 61 from Tetrahymena thermophila (strain SB210).